The following is an 82-amino-acid chain: Penaeidin-3g (82 aa).

The N-terminal stretch at 1–19 (MRLVVCLVFLASFALVCQG) is a signal peptide. Gln-20 bears the Pyrrolidone carboxylic acid mark. 3 cysteine pairs are disulfide-bonded: Cys-51/Cys-66, Cys-55/Cys-73, and Cys-67/Cys-74. Ser-81 is subject to Serine amide.

It belongs to the penaeidin family.

It localises to the cytoplasmic granule. Its function is as follows. Antibacterial and antifungal activity. Presents chitin-binding activity. This is Penaeidin-3g from Penaeus vannamei (Whiteleg shrimp).